The following is a 143-amino-acid chain: Large ribosomal subunit protein uL16 (143 aa).

The protein belongs to the universal ribosomal protein uL16 family. Part of the 50S ribosomal subunit.

Functionally, binds 23S rRNA and is also seen to make contacts with the A and possibly P site tRNAs. The chain is Large ribosomal subunit protein uL16 from Sphingopyxis alaskensis (strain DSM 13593 / LMG 18877 / RB2256) (Sphingomonas alaskensis).